A 381-amino-acid chain; its full sequence is Alkanesulfonate monooxygenase (381 aa).

This sequence belongs to the SsuD family. In terms of assembly, homotetramer.

The catalysed reaction is an alkanesulfonate + FMNH2 + O2 = an aldehyde + FMN + sulfite + H2O + 2 H(+). Its function is as follows. Catalyzes the desulfonation of aliphatic sulfonates. The chain is Alkanesulfonate monooxygenase from Escherichia coli O1:K1 / APEC.